The chain runs to 319 residues: MHTVTQTSLYGKDLLTLKDLSEEDINALLAEAGELKQNKIQPIFHGKTLAMIFEKSSTRTRVSFEAGMAQLGGSALFLSQKDLQLGRGETVADTAKVLSGYVDAIMIRTFEHEKVEELAKEADIPVINGLTDKYHPCQALADLLTIKEIKGKLKGVKVAYIGDGNNVAHSLMIGCAKMGCDISIASPKGYEVLDEAAEAAKTYALQSGSSVTLTDDPIEAVKDADVIYSDVFTSMGQEAEEQERLAVFAPYQVNAALVSHAKPDYTFLHCLPAHREEEVTAEIIDGPNSAVFQQAENRLHVQKALLKAILYKGESSKNC.

Carbamoyl phosphate-binding positions include serine 57–threonine 60, glutamine 84, arginine 108, and histidine 135–glutamine 138. Residues asparagine 166, aspartate 230, and serine 234–methionine 235 each bind L-ornithine. Carbamoyl phosphate is bound by residues cysteine 270–leucine 271 and arginine 298.

This sequence belongs to the aspartate/ornithine carbamoyltransferase superfamily. OTCase family.

It localises to the cytoplasm. The catalysed reaction is carbamoyl phosphate + L-ornithine = L-citrulline + phosphate + H(+). Its pathway is amino-acid biosynthesis; L-arginine biosynthesis; L-arginine from L-ornithine and carbamoyl phosphate: step 1/3. In terms of biological role, reversibly catalyzes the transfer of the carbamoyl group from carbamoyl phosphate (CP) to the N(epsilon) atom of ornithine (ORN) to produce L-citrulline. The protein is Ornithine carbamoyltransferase (argF) of Bacillus subtilis (strain 168).